A 164-amino-acid chain; its full sequence is Transcription elongation factor GreA (164 aa).

Positions 50 to 76 form a coiled coil; the sequence is YHAAREEQGQQEARIRQLQDLLSNAKV.

Belongs to the GreA/GreB family.

Functionally, necessary for efficient RNA polymerase transcription elongation past template-encoded arresting sites. The arresting sites in DNA have the property of trapping a certain fraction of elongating RNA polymerases that pass through, resulting in locked ternary complexes. Cleavage of the nascent transcript by cleavage factors such as GreA or GreB allows the resumption of elongation from the new 3'terminus. GreA releases sequences of 2 to 3 nucleotides. This is Transcription elongation factor GreA from Mycobacterium bovis (strain ATCC BAA-935 / AF2122/97).